Here is a 999-residue protein sequence, read N- to C-terminus: Sarcoplasmic/endoplasmic reticulum calcium ATPase 3 (999 aa).

M1 bears the N-acetylmethionine mark. Residues 1–48 (MEEAHLLSAADVLRRFSVTAEGGLTLEQVTDARERYGPNELPTEEGKS) lie on the Cytoplasmic side of the membrane. S17 is subject to Phosphoserine. T19 carries the post-translational modification Phosphothreonine. The chain crosses the membrane as a helical span at residues 49 to 69 (LWELVVEQFEDLLVRILLLAA). Topologically, residues 70–89 (LVSFVLAWFEEGEETTTAFV) are lumenal. The helical transmembrane segment at 90–110 (EPLVIMLILVANAIVGVWQER) threads the bilayer. Topologically, residues 111–253 (NAESAIEALK…PERTPLQRKL (143 aa)) are cytoplasmic. The chain crosses the membrane as a helical span at residues 254 to 273 (DEFGRQLSHAISVICVAVWV). The Lumenal portion of the chain corresponds to 274 to 295 (INIGHFADPAHGGSWLRGAVYY). Residues 296 to 313 (FKIAVALAVAAIPEGLPA) form a helical membrane-spanning segment. 4 residues coordinate Ca(2+): V304, A305, I307, and E309. At 314 to 757 (VITTCLALGT…EEGRAIYNNM (444 aa)) the chain is on the cytoplasmic side. The 4-aspartylphosphate intermediate role is filled by D351. Residues D351 and T353 each contribute to the Mg(2+) site. Residue T353 participates in ATP binding. Positions 370–400 (AEAEAGACRLHEFTISGTTYTPEGEVRQGEQ) are interaction with phospholamban 1. Phosphothreonine is present on T415. Residues E442, R489, K515, R560, T625, G626, and D627 each coordinate ATP. Residue S662 is modified to Phosphoserine. R678 and K684 together coordinate ATP. Position 703 (D703) interacts with Mg(2+). N706 is a binding site for ATP. A helical membrane pass occupies residues 758 to 777 (KQFIRYLISSNVGEVVCIFL). The Ca(2+) site is built by N768 and E771. Topologically, residues 778–787 (TAILGLPEAL) are lumenal. The chain crosses the membrane as a helical span at residues 788-808 (IPVQLLWVNLVTDGLPATALG). The interval 788-808 (IPVQLLWVNLVTDGLPATALG) is interaction with phospholamban 2. N796, T799, and D800 together coordinate Ca(2+). Over 809 to 828 (FNPPDLDIMEKLPRNPREAL) the chain is Cytoplasmic. Residues 829-851 (ISGWLFFRYLAIGVYVGLATVAA) form a helical membrane-spanning segment. Residues 852-897 (ATWWFLYDAEGPQVTFHQLRNFLKCSEDNPLFAGIDCEVFESRFPT) lie on the Lumenal side of the membrane. Residues 898 to 917 (TMALSVLVTIEMCNALNSVS) traverse the membrane as a helical segment. E908 contacts Ca(2+). At 918-930 (ENQSLLRMPPWLN) the chain is on the cytoplasmic side. The chain crosses the membrane as a helical span at residues 931-949 (PWLLGAVVMSMALHFLILL). Topologically, residues 950-964 (VPPLPLIFQVTPLSG) are lumenal. A helical transmembrane segment spans residues 965–985 (RQWGVVLQMSLPVILLDEALK). At 986 to 999 (YLSRHHVDEKKDLK) the chain is on the cytoplasmic side.

Belongs to the cation transport ATPase (P-type) (TC 3.A.3) family. Type IIA subfamily. In terms of assembly, interacts with sarcolipin (SLN). Interacts with phospholamban (PLN). Interacts with myoregulin (MRLN). Interacts with DWORF. Interacts with VMP1. Interacts with TUNAR; the interaction occurs at low levels in low glucose conditions and is increased by high glucose levels. Mg(2+) is required as a cofactor. In terms of tissue distribution, found in most tissues. Most abundant in large and small intestine, spleen and lung. Also detected in PC12 cells.

Its subcellular location is the endoplasmic reticulum membrane. The protein resides in the sarcoplasmic reticulum membrane. It carries out the reaction Ca(2+)(in) + ATP + H2O = Ca(2+)(out) + ADP + phosphate + H(+). With respect to regulation, inhibited by sarcolipin (SLN), phospholamban (PLN) and myoregulin (MRLN). Enhanced by DWORF; DWORF increases activity by displacing sarcolipin (SLN), phospholamban (PLN) and myoregulin (MRLN). Functionally, this magnesium-dependent enzyme catalyzes the hydrolysis of ATP coupled with the transport of the calcium. Transports calcium ions from the cytosol into the sarcoplasmic/endoplasmic reticulum lumen. Contributes to calcium sequestration involved in muscular excitation/contraction. Its function is as follows. This magnesium-dependent enzyme catalyzes the hydrolysis of ATP coupled with the transport of calcium. Transports calcium ions from the cytosol into the sarcoplasmic/endoplasmic reticulum lumen. Contributes to calcium sequestration involved in muscular excitation/contraction. In Rattus norvegicus (Rat), this protein is Sarcoplasmic/endoplasmic reticulum calcium ATPase 3 (Atp2a3).